Reading from the N-terminus, the 364-residue chain is Cell cycle control protein 50A (364 aa).

Residues Met-1 to Pro-28 are disordered. Position 2 is an N-acetylalanine (Ala-2). Residues Ala-2–Thr-49 are Cytoplasmic-facing. A helical membrane pass occupies residues Val-50 to Val-70. The Exoplasmic loop portion of the chain corresponds to Thr-71–Leu-328. 3 disulfides stabilise this stretch: Cys-91/Cys-104, Cys-94/Cys-102, and Cys-157/Cys-171. Asn-98 is a glycosylation site (N-linked (GlcNAc...) asparagine). Residue Asn-297 is glycosylated (N-linked (GlcNAc...) asparagine). Residues Gly-329–Ile-349 traverse the membrane as a helical segment. Residues Asn-350–Ile-364 lie on the Cytoplasmic side of the membrane.

The protein belongs to the CDC50/LEM3 family. Component of various P4-ATPase flippase complexes which consists of a catalytic alpha subunit and an accessory beta subunit. Interacts with ATP8A1 to form a flippase complex; this complex forms an intermediate phosphoenzyme. The ATP8A2:TMEM30A flippase complex has been purified, and ATP8B1:TMEM30A and ATP8B2:TMEM30A flippase complexes have been shown to form intermediate phosphoenzymes in vitro. Interacts with alpha subunits ATP8A1, ATP8B1, ATP8B2, ATP8B4, ATP10A, ATP10B, ATP10D, ATP11A, ATP11B and ATP11C. N-glycosylated. Contains high mannose-type oligosaccharides. As to expression, expressed in photoreceptor cells; detected in retina outer segment (at protein level). Detected in hepatocytes liver sinusoidal endothelial cells and kidney brush border of the proximal tubules (at protein level). Expressed in brain (at protein level).

The protein localises to the membrane. Its subcellular location is the cell membrane. The protein resides in the golgi apparatus. It localises to the cytoplasmic vesicle. It is found in the secretory vesicle membrane. The protein localises to the apical cell membrane. Its function is as follows. Accessory component of a P4-ATPase flippase complex which catalyzes the hydrolysis of ATP coupled to the transport of aminophospholipids from the outer to the inner leaflet of various membranes and ensures the maintenance of asymmetric distribution of phospholipids. Phospholipid translocation also seems to be implicated in vesicle formation and in uptake of lipid signaling molecules. The beta subunit may assist in binding of the phospholipid substrate. Required for the proper folding, assembly and ER to Golgi exit of the ATP8A2:TMEM30A flippase complex. ATP8A2:TMEM30A may be involved in regulation of neurite outgrowth, and, reconstituted to liposomes, predomiminantly transports phosphatidylserine (PS) and to a lesser extent phosphatidylethanolamine (PE). The ATP8A1:TMEM30A flippase complex seems to play a role in regulation of cell migration probably involving flippase-mediated translocation of phosphatidylethanolamine (PE) at the plasma membrane. Required for the formation of the ATP8A2, ATP8B1 and ATP8B2 P-type ATPAse intermediate phosphoenzymes. Involved in uptake of platelet-activating factor (PAF). Can also mediate the export of alpha subunits ATP8A1, ATP8B1, ATP8B2, ATP8B4, ATP10A, ATP10B, ATP10D, ATP11A, ATP11B and ATP11C from the ER to other membrane localizations. The sequence is that of Cell cycle control protein 50A from Mus musculus (Mouse).